Reading from the N-terminus, the 591-residue chain is MMRSHYCGQLNESLEGQEVTLCGWVHRRRDHGGVIFLDIRDREGLAQVVFDPDRAETFAKADRVRSEYVVRITGKVRPRPAGAVNPNMASGAIEVLGYELDVLNQAETPPFPLDEYSDVGEETRLRYRFIDLRRPEMAAKLKLRSSITSSIRRYLDENGFLDVETPILTRATPEGARDYLVPSRTHAGSFFALPQSPQLFKQLLMVAGFDRYYQIAKCFRDEDLRADRQPEFTQIDIETSFLDEADIMGITENMIRKLFKEVLDVEFGELPHMTFEEAMRRYGSDKPDLRIPLELVDVADQLKAVEFKVFSGPANDPKGRVAALRVPGAASMPRSQIDDYTRFVGIYGAKGLAYIKVNERAKGVEGLQSPIVKFIPKENLDVILDRVGAVDGDIVFFGADKAKIVSEALGALRIRLGHDLKLLTCEWAPLWVVDFPMFEENDDGSLSALHHPFTAPKCTPEELAANPAVALSRAYDMVLNGTELGGGSIRIHRKEMQQAVFRILGIDEAEQQEKFGFLLDALKYGAPPHGGLAFGLDRLVMLMTGASSIREVIAFPKTQSAACVMTQAPGAVDAKALRELHIRLREQPKAE.

Glutamate 174 is an L-aspartate binding site. The segment at 198–201 (QLFK) is aspartate. An L-aspartate-binding site is contributed by arginine 220. Residues 220–222 (RDE) and glutamine 229 contribute to the ATP site. Histidine 450 is a binding site for L-aspartate. Glutamate 483 lines the ATP pocket. Arginine 490 is a binding site for L-aspartate. Residue 535-538 (GLDR) participates in ATP binding.

It belongs to the class-II aminoacyl-tRNA synthetase family. Type 1 subfamily. As to quaternary structure, homodimer.

It is found in the cytoplasm. The enzyme catalyses tRNA(Asx) + L-aspartate + ATP = L-aspartyl-tRNA(Asx) + AMP + diphosphate. In terms of biological role, aspartyl-tRNA synthetase with relaxed tRNA specificity since it is able to aspartylate not only its cognate tRNA(Asp) but also tRNA(Asn). Reaction proceeds in two steps: L-aspartate is first activated by ATP to form Asp-AMP and then transferred to the acceptor end of tRNA(Asp/Asn). This Azotobacter vinelandii (strain DJ / ATCC BAA-1303) protein is Aspartate--tRNA(Asp/Asn) ligase.